Here is a 210-residue protein sequence, read N- to C-terminus: MADS-box protein AGL42 (210 aa).

The region spanning 1-61 (MVRGKIEMKK…GRLYEFSSSD (61 aa)) is the MADS-box domain. The K-box domain occupies 87–177 (LQQLKQEASH…HQKNVINPWR (91 aa)).

Expressed in quiescent center (QC) cells of root tips. Expressed at the base of the petiole of cotyledons and leaves, in flower buds, petals, sepals and abscission zone of flowers and siliques.

It is found in the nucleus. In terms of biological role, MADS-box transcription factor that acts with AGL71 and AGL72 in the control of flowering time. Promotes flowering at the shoot apical and axillary meristems. Seems to act through a gibberellin-dependent pathway. Interacts genetically with SOC1 and its expression is directly regulated by SOC1. Plays a role in controlling flower organ senescence and abscission by repressing ethylene responses and regulating the expression of BOP2 and IDA. The sequence is that of MADS-box protein AGL42 (AGL42) from Arabidopsis thaliana (Mouse-ear cress).